Consider the following 154-residue polypeptide: SsrA-binding protein (154 aa).

The protein belongs to the SmpB family.

The protein resides in the cytoplasm. Required for rescue of stalled ribosomes mediated by trans-translation. Binds to transfer-messenger RNA (tmRNA), required for stable association of tmRNA with ribosomes. tmRNA and SmpB together mimic tRNA shape, replacing the anticodon stem-loop with SmpB. tmRNA is encoded by the ssrA gene; the 2 termini fold to resemble tRNA(Ala) and it encodes a 'tag peptide', a short internal open reading frame. During trans-translation Ala-aminoacylated tmRNA acts like a tRNA, entering the A-site of stalled ribosomes, displacing the stalled mRNA. The ribosome then switches to translate the ORF on the tmRNA; the nascent peptide is terminated with the 'tag peptide' encoded by the tmRNA and targeted for degradation. The ribosome is freed to recommence translation, which seems to be the essential function of trans-translation. The polypeptide is SsrA-binding protein (Methylobacillus flagellatus (strain ATCC 51484 / DSM 6875 / VKM B-1610 / KT)).